The following is a 197-amino-acid chain: uncharacterized protein (197 aa).

The 152-residue stretch at 33 to 184 (MISKIMDASS…IAEFMSILGK (152 aa)) folds into the SIS domain.

It belongs to the SIS family. PHI subfamily.

This is an uncharacterized protein from Methanothermobacter thermautotrophicus (strain ATCC 29096 / DSM 1053 / JCM 10044 / NBRC 100330 / Delta H) (Methanobacterium thermoautotrophicum).